We begin with the raw amino-acid sequence, 191 residues long: Fe/S biogenesis protein NfuA (191 aa).

[4Fe-4S] cluster is bound by residues Cys-149 and Cys-152.

The protein belongs to the NfuA family. Homodimer. The cofactor is [4Fe-4S] cluster.

Its function is as follows. Involved in iron-sulfur cluster biogenesis. Binds a 4Fe-4S cluster, can transfer this cluster to apoproteins, and thereby intervenes in the maturation of Fe/S proteins. Could also act as a scaffold/chaperone for damaged Fe/S proteins. This Salmonella paratyphi A (strain ATCC 9150 / SARB42) protein is Fe/S biogenesis protein NfuA.